Consider the following 130-residue polypeptide: Small ribosomal subunit protein uS9 (130 aa).

The protein belongs to the universal ribosomal protein uS9 family.

In Halalkalibacterium halodurans (strain ATCC BAA-125 / DSM 18197 / FERM 7344 / JCM 9153 / C-125) (Bacillus halodurans), this protein is Small ribosomal subunit protein uS9.